A 475-amino-acid chain; its full sequence is Cytosolic non-specific dipeptidase (475 aa).

K9 is modified (N6-acetyllysine). S58 bears the Phosphoserine mark. Mn(2+) is bound at residue H99. D101 is an active-site residue. D132 lines the Mn(2+) pocket. E166 functions as the Proton acceptor in the catalytic mechanism. Residues 166–167 (EE), D195, H228, T330, R343, S417, and H445 contribute to the substrate site. Positions 167 and 195 each coordinate Mn(2+). H445 contacts Mn(2+).

The protein belongs to the peptidase M20A family. As to quaternary structure, homodimer. It depends on Mn(2+) as a cofactor.

The protein resides in the cytoplasm. It catalyses the reaction Hydrolysis of dipeptides, preferentially hydrophobic dipeptides including prolyl amino acids.. It carries out the reaction L-threonyl-L-threonine + H2O = 2 L-threonine. The catalysed reaction is L-threonyl-L-serine + H2O = L-threonine + L-serine. The enzyme catalyses L-seryl-L-threonine + H2O = L-threonine + L-serine. It catalyses the reaction L-cysteinylglycine + H2O = L-cysteine + glycine. It carries out the reaction L-alanyl-L-cysteine + H2O = L-cysteine + L-alanine. The catalysed reaction is (S)-lactate + L-phenylalanine = N-[(S)-lactoyl]-L-phenylalanine + H2O. Functionally, catalyzes the peptide bond hydrolysis in dipeptides, displaying a non-redundant activity toward threonyl dipeptides. Mediates threonyl dipeptide catabolism in a tissue-specific way. Has high dipeptidase activity toward cysteinylglycine, an intermediate metabolite in glutathione metabolism. Metabolizes N-lactoyl-amino acids, both through hydrolysis to form lactic acid and amino acids, as well as through their formation by reverse proteolysis. Plays a role in the regulation of cell cycle arrest and apoptosis. The sequence is that of Cytosolic non-specific dipeptidase (CNDP2) from Bos taurus (Bovine).